The chain runs to 279 residues: Tryptophan 2,3-dioxygenase (279 aa).

Residues 48–52 (FIVIH), tyrosine 110, and arginine 114 each bind substrate. Histidine 237 provides a ligand contact to heme. Residue threonine 251 coordinates substrate.

It belongs to the tryptophan 2,3-dioxygenase family. As to quaternary structure, homotetramer. The cofactor is heme.

It carries out the reaction L-tryptophan + O2 = N-formyl-L-kynurenine. The protein operates within amino-acid degradation; L-tryptophan degradation via kynurenine pathway; L-kynurenine from L-tryptophan: step 1/2. Heme-dependent dioxygenase that catalyzes the oxidative cleavage of the L-tryptophan (L-Trp) pyrrole ring and converts L-tryptophan to N-formyl-L-kynurenine. Catalyzes the oxidative cleavage of the indole moiety. This chain is Tryptophan 2,3-dioxygenase, found in Bacillus thuringiensis (strain Al Hakam).